The following is a 331-amino-acid chain: Leucine-rich repeat-containing protein 26 (331 aa).

The N-terminal stretch at 1-26 is a signal peptide; the sequence is MRGSFFSRLPPQLSLLLLLSLRRVWT. The Extracellular portion of the chain corresponds to 27–261; it reads QEDIGTAPSK…QCTQSLAARD (235 aa). The LRRNT domain maps to 34–71; it reads PSKSPVAPECPEACSCSLGGKANCSALALPAVPADLSW. 2 disulfides stabilise this stretch: Cys43-Cys49 and Cys47-Cys57. 5 LRR repeats span residues 72 to 93, 96 to 117, 120 to 141, 144 to 165, and 168 to 191; these read QVRSLLLDHNRVSALPPGAFAN, ALLYLDLRENRLRSVHARAFWG, VLQWLDLSSNQLETLPPGTFAP, ALSFLSLAGNRLALLEPSILGP, and LLRVLSLQDNSLSAIEAGLLNNLP. Positions 201–255 constitute an LRRCT domain; sequence NPWTCNCALRPLCTWLRKHPRPASETETLLCVSPRLQTLSLLTAFPDAAFKQCTQ. Cystine bridges form between Cys205–Cys231 and Cys207–Cys253. Residues 262–282 traverse the membrane as a helical segment; that stretch reads LAVVYALGPVSFLASLAICLA. Topologically, residues 283 to 331 are cytoplasmic; the sequence is LGSVLTACGARRRRRRRTTVRHLLRRQLDPEGPPSLEDAGSPVTAAIQA. The disordered stretch occupies residues 310 to 331; that stretch reads LDPEGPPSLEDAGSPVTAAIQA.

As to quaternary structure, interacts with KCNMA1.

The protein localises to the cell membrane. It localises to the cytoplasm. The protein resides in the cytoskeleton. Functionally, auxiliary protein of the large-conductance, voltage and calcium-activated potassium channel (BK alpha). Required for the conversion of BK alpha channels from a high-voltage to a low-voltage activated channel type in non-excitable cells. These are characterized by negative membrane voltages and constant low levels of calcium. This Mus musculus (Mouse) protein is Leucine-rich repeat-containing protein 26 (Lrrc26).